Here is a 2346-residue protein sequence, read N- to C-terminus: Highly reducing polyketide synthase claI (2346 aa).

The Ketosynthase family 3 (KS3) domain occupies 10–412; the sequence is TPAIAVVGMA…GTNCHLIVED (403 aa). Catalysis depends on for beta-ketoacyl synthase activity residues Cys183, His295, and His335. Residues 530-842 are malonyl-CoA:ACP transacylase (MAT) domain; sequence IFTGQGSQWP…EYFSALKRGE (313 aa). Ser622 (for malonyltransferase activity) is an active-site residue. An N-terminal hotdog fold region spans residues 912 to 1048; the sequence is HDLLGSKILG…GLIRTSEEDS (137 aa). Positions 912–1213 are dehydratase (DH) domain; the sequence is HDLLGSKILG…INGLRFSSVD (302 aa). A PKS/mFAS DH domain is found at 912-1218; the sequence is HDLLGSKILG…FSSVDLGSVQ (307 aa). His944 (proton acceptor; for dehydratase activity) is an active-site residue. The interval 1060-1218 is C-terminal hotdog fold; the sequence is IHATPAQVWY…FSSVDLGSVQ (159 aa). Catalysis depends on Asp1124, which acts as the Proton donor; for dehydratase activity. The tract at residues 1633–1946 is enoyl reductase (ER) domain; sequence GSLEALQWTQ…SARHIGKILI (314 aa). The tract at residues 1972–2151 is ketoreductase (KR) domain; that stretch reads TYLIVGGLRG…HSLDLGVVDA (180 aa). The 79-residue stretch at 2258 to 2336 folds into the Carrier domain; it reads SQLVEKAVTL…ALAEKMVSKV (79 aa). Ser2296 bears the O-(pantetheine 4'-phosphoryl)serine mark.

Pantetheine 4'-phosphate serves as cofactor.

The protein operates within secondary metabolite biosynthesis. Highly reducing polyketide synthase; part of the cla gene cluster that produces clavatol and ortho-quinone methide. The clavatol biosynthesis cluster cla and the terrestric acid cluster tra are both involved in the production of peniphenones and penilactones. The non-reducing PKS claF is responsible for the formation of clavatol from successive condensations of 3 malonyl-CoA units, presumably with a simple acetyl-CoA starter unit, and 2 methylation steps. The esterase claE probably collaborates with claF by catalyzing the hydrolysis of ACP-bound acyl intermediates to free the ACP from stalled intermediates. The clavatol oxidase claD then converts clavatol to hydroxyclavatol. Spontaneous dehydration of hydroxyclavatol leads to the accumulation of the highly active ortho-quinone methide. On the other hand, the PKS-NRPS hybrid traA is involved in the formation of crustosic acid, with the help of traB and traD. The polyketide synthase module (PKS) of traA is responsible for the synthesis of the polyketide backbone via the condensation of an acetyl-CoA starter unit with 3 malonyl-CoA units. The downstream nonribosomal peptide synthetase (NRPS) module then amidates the carboxyl end of the polyketide with L-malic acid. Because traA lacks a designated enoylreductase (ER) domain, the required activity is provided the enoyl reductase traG. Crustosic acid undergoes decarboxylation and isomerization to the terrestric acid, catalyzed by the 2-oxoglutarate-dependent dioxygenase traH. Both acids are further converted to the 2 gamma-butyrolactones (R)-5-methyltetronic acid and (S)-5-carboxylmethyltetronic acid, with involvement of the cytochrome P450 monooxygenase claJ. Spontaneous addition of the methide to these gamma-butyrolactones leads to peniphenone D and penilactone D, which undergo again stereospecific attacking by methide to give penilactones A and B. The function of the highly reducing polyketide synthase claI has not been investigated yet. The sequence is that of Highly reducing polyketide synthase claI from Penicillium crustosum (Blue mold fungus).